The following is a 425-amino-acid chain: Dihydroorotase (425 aa).

2 residues coordinate Zn(2+): His-56 and His-58. Residues 58 to 60 (HYR) and Asn-90 each bind substrate. The Zn(2+) site is built by Asp-148, His-175, and His-228. A substrate-binding site is contributed by Asn-274. Residue Asp-301 participates in Zn(2+) binding. Asp-301 is an active-site residue. Substrate is bound by residues His-305 and 319–320 (FG).

This sequence belongs to the metallo-dependent hydrolases superfamily. DHOase family. Class I DHOase subfamily. Requires Zn(2+) as cofactor.

The enzyme catalyses (S)-dihydroorotate + H2O = N-carbamoyl-L-aspartate + H(+). Its pathway is pyrimidine metabolism; UMP biosynthesis via de novo pathway; (S)-dihydroorotate from bicarbonate: step 3/3. Functionally, catalyzes the reversible cyclization of carbamoyl aspartate to dihydroorotate. This chain is Dihydroorotase, found in Lactobacillus acidophilus (strain ATCC 700396 / NCK56 / N2 / NCFM).